We begin with the raw amino-acid sequence, 472 residues long: WASH complex subunit 1 (472 aa).

The segment at 1 to 51 (MPQNRSMESQAYSLPLILPDLRREEAIHQITDTLQHLQTVSNDIFSRILQR) is required for WASH complex assembly. Disordered stretches follow at residues 289–365 (ENSR…SDGR), 377–412 (GIGK…GDLM), and 426–472 (ISGK…DWES). Pro residues-rich tracts occupy residues 301-319 (LPPP…PPEP) and 327-336 (SLAPPLPIPA). The segment at 352 to 472 (QGAPKEVVNP…GDGDEEDWES (121 aa)) is VCA. The WH2 domain occupies 364 to 386 (GRASLLESIRQAGGIGKAKLRNV). The span at 385–401 (NVKEKKLEKKKMKEQEQ) shows a compositional bias: basic and acidic residues.

Belongs to the WASH1 family. As to quaternary structure, component of the WASH complex.

It is found in the early endosome membrane. Its subcellular location is the recycling endosome membrane. In terms of biological role, acts as a nucleation-promoting factor at the surface of endosomes, where it recruits and activates the Arp2/3 complex to induce actin polymerization, playing a key role in the fission of tubules that serve as transport intermediates during endosome sorting. The chain is WASH complex subunit 1 from Xenopus tropicalis (Western clawed frog).